Consider the following 892-residue polypeptide: Alpha-actinin-1 (892 aa).

Met-1 bears the N-acetylmethionine mark. The segment at 1–247 (MDHYDSQQTN…IMTYVSSFYH (247 aa)) is actin-binding. Ser-6 carries the phosphoserine modification. Tyr-12 is subject to Phosphotyrosine; by FAK1. 2 Calponin-homology (CH) domains span residues 31-135 (KQQR…LRFA) and 144-250 (TSAK…HAFS). 2 positions are modified to N6-acetyllysine: Lys-95 and Lys-195. Spectrin repeat units follow at residues 274–384 (QLME…WLLN), 394–499 (HLAE…ALER), 509–620 (QLYL…ALTE), and 630–733 (RLRK…EVEN). The interaction with DDN stretch occupies residues 274 to 733 (QLMEDYEKLA…IARTINEVEN (460 aa)). Ser-471 bears the Phosphoserine mark. Lys-676 bears the N6-acetyllysine mark. At Ser-677 the chain carries Phosphoserine. EF-hand domains lie at 746–781 (EQMN…LGYD) and 787–822 (QGEA…ETAD). Residues Asp-759, Asp-761, Ser-763, Thr-765, and Glu-770 each coordinate Ca(2+). At Ser-890 the chain carries Phosphoserine.

The protein belongs to the alpha-actinin family. Homodimer; antiparallel. Interacts with MYOZ2, TTID and LPP. Interacts with DDN. Interacts with PSD. Interacts with MICALL2. Interacts with DNM2 and CTTN. Interacts with PDLIM1. Interacts with PDLIM2. Interacts with PDLIM4 (via PDZ domain). Interacts with IGSF8.

It is found in the cytoplasm. The protein resides in the cytoskeleton. It localises to the myofibril. The protein localises to the sarcomere. Its subcellular location is the z line. It is found in the cell membrane. The protein resides in the cell junction. It localises to the cell projection. The protein localises to the ruffle. In terms of biological role, F-actin cross-linking protein which is thought to anchor actin to a variety of intracellular structures. Association with IGSF8 regulates the immune synapse formation and is required for efficient T-cell activation. This Rattus norvegicus (Rat) protein is Alpha-actinin-1 (Actn1).